A 792-amino-acid polypeptide reads, in one-letter code: MKYNQYAYVETSPEKATEELLAINFLPENYSSLSFSELLAVLTGNVLAEATTRQAKDAKLAEFAVDDQTDLAAFLLDTPTAITASQFANVALQLLGYHPNYDYSLTDPLTCGEKHALPAFKDLTSKEELIFAFYRLLNTRSKNGQILLDVMAGKGYFTQFWGEGKFMLFNGKSLPVFDTSQVIREVVYVQSDLDTDGDGKGDLLPVTIFRPVESQDQLKVPALYTASPYFGGIIDNVKTNHNVDENLTDATTWTNPKYVAKPLVKSPAPSGQDVPATELATGQSSYGLNEYLLARGFASVFSGAIGNRHGDGIRITGSPEETISQKEVIEWLTGDRVAYTDRTRRFETKASWCSGNVGMTGRSYLGTLQIAIATTGVKGLKTVVSEAAISSWYDYYREHGLVIAPSECQGEDMDKLAEVCQSNLWDGGNFTAKKAYEAEQAELLAAQDRATGQYSDFWESRNYRHHADGIKCSWISVHGLNDWNVKPKNVYKIWQKVKQLPVESHLFLHQGPHYNMNNLVSIDFTDLMNLWFVHELLEVENGAYEQWPKVMIQDNLEADKWHAESDWANDLGQASLYSPTADGYLSTVENGTGQLTFTDLGGTEFKKAGISETDWEYQFISGEKKWAKASLRFESEEFLHPTTLVGRPKVQVRVAANKTVGQLSVALVDLGTRQRLTATPKIFARGNQPFGYRFEADSLQEFVPDKATKAKLITKAHMNLQNYQDMKQPSKLEAGQFVDLEFELQPTYYTLPAGAKLCLIIYSTDQGMTKRPLETEDYTVDLAGTALLLYRK.

Active-site charge relay system residues include Ser363, Asp482, and His513.

This sequence belongs to the peptidase S15 family. As to quaternary structure, homodimer.

The protein localises to the cytoplasm. The enzyme catalyses Hydrolyzes Xaa-Pro-|- bonds to release unblocked, N-terminal dipeptides from substrates including Ala-Pro-|-p-nitroanilide and (sequentially) Tyr-Pro-|-Phe-Pro-|-Gly-Pro-|-Ile.. Removes N-terminal dipeptides sequentially from polypeptides having unsubstituted N-termini provided that the penultimate residue is proline. This Lactobacillus delbrueckii subsp. bulgaricus (strain ATCC BAA-365 / Lb-18) protein is Xaa-Pro dipeptidyl-peptidase.